The chain runs to 845 residues: MSKFDVEQLLSELNQDEKISLLSAVDFWHTKKIERLGIPAVRVSDGPNGIRGTKFFDGVPSGCFPNGTGLASTFDRDLLETAGKLMAKESIAKNAAVILGPTTNMQRGPLGGRGFESFSEDPYLAGMATSSVVKGMQGEGIAATVKHFVCNDLEDQRFSSNSIVSERALREIYLEPFRLAVKHANPVCIMTAYNKVNGDHCSQSKKLLIDILRDEWKWDGMLMSDWFGTYTTAAAIKNGLDIEFPGPTRWRTRALVSHSLNSREQITTEDVDDRVRQVLKMIKFVVDNLEKTGIVENGPESTSNNTKETSDLLREIAADSIVLLKNKNNYLTSKERRQYHVIGPNAKAKTSSGGGSASMNSYYVVSPYEGIVNKLGKEVDYTVGAYSHKSIGGLAESSLIDAAKPADAENAGLIAKFYSNPVEERSEDEEPFHVTKVNRSNVHLFDFKHEKVDPKNPYFFVTLTGQYVPQEDGDYIFSLQVYGSGLFYLNDELIIDQKHNQERGSFCFGAGTKERTKKLTLKKGQVYNVRVEYGSGPTSGLVGEFGAGGFQAGVIKAIDDDEEIRNAAELAAKHDKAVLIIGLNGEWETEGYDRENMDLPKRTNELVRAVLKANPNTVIVNQSGTPVEFPWLEEANALVQAWYGGNELGNAIADVLYGDVVPNGKLSLSWPFKLQDNPAFLNFKTEFGRVVYGEDIFVGYRYYEKLQRKVAFPFGYGLSYTTFELDISDFKVTDDKIDISVDVKNTGDKFAGSEVVQVYFSALNSKVSRPVKELKGFEKVHLEPGEKKTVNIELELKDAISYFNEELGKWHVEAGEYLVSVGTSSDDILSVKEFKVEKDLYWKGL.

The N-linked (GlcNAc...) asparagine glycan is linked to Asn66. Asp225 is a catalytic residue. 3 N-linked (GlcNAc...) asparagine glycosylation sites follow: Asn304, Asn438, and Asn621. The region spanning 408 to 568 (AENAGLIAKF…DDDEEIRNAA (161 aa)) is the PA14 domain.

Belongs to the glycosyl hydrolase 3 family. As to quaternary structure, homotetramer.

The catalysed reaction is Hydrolysis of terminal, non-reducing beta-D-glucosyl residues with release of beta-D-glucose.. It functions in the pathway glycan metabolism; cellulose degradation. The protein is Beta-glucosidase of Kluyveromyces marxianus (Yeast).